The sequence spans 61 residues: Metallothionein-II, hippocampal (61 aa).

Position 1 is an N-acetylmethionine (methionine 1). Residues 1–29 (MDPNCSCATGGSCTCANSCTCKACKCASC) form a beta region. Residues cysteine 5, cysteine 7, cysteine 13, cysteine 15, cysteine 19, cysteine 21, cysteine 24, cysteine 26, cysteine 29, cysteine 33, cysteine 34, cysteine 36, cysteine 37, cysteine 41, cysteine 44, cysteine 48, cysteine 50, cysteine 57, cysteine 59, and cysteine 60 each contribute to the a divalent metal cation site. Residues 30–61 (KKSCCSCCPVGCAKCAQGCICKGASDKCSCCA) form an alpha region.

The protein belongs to the metallothionein superfamily. Type 1 family.

In terms of biological role, metallothioneins have a high content of cysteine residues that bind various heavy metals; these proteins are transcriptionally regulated by both heavy metals and glucocorticoids. This isoform may play a role in regulating the transport, accumulation, and compartmentation of zinc in the hippocampus. The polypeptide is Metallothionein-II, hippocampal (Bos taurus (Bovine)).